A 329-amino-acid polypeptide reads, in one-letter code: Ketol-acid reductoisomerase (NADP(+)) (329 aa).

In terms of domain architecture, KARI N-terminal Rossmann spans 2–182 (TQLFYDTDAD…GGTRAGILET (181 aa)). Residues 25-28 (YGSQ), Ser-51, Ser-53, and 83-86 (DEFQ) each bind NADP(+). Residue His-108 is part of the active site. NADP(+) is bound at residue Gly-134. Residues 183-328 (NFKEETETDL…KGLRSMFSWL (146 aa)) enclose the KARI C-terminal knotted domain. The Mg(2+) site is built by Asp-191, Glu-195, Glu-227, and Glu-231. Ser-252 serves as a coordination point for substrate.

This sequence belongs to the ketol-acid reductoisomerase family. Requires Mg(2+) as cofactor.

The catalysed reaction is (2R)-2,3-dihydroxy-3-methylbutanoate + NADP(+) = (2S)-2-acetolactate + NADPH + H(+). It catalyses the reaction (2R,3R)-2,3-dihydroxy-3-methylpentanoate + NADP(+) = (S)-2-ethyl-2-hydroxy-3-oxobutanoate + NADPH + H(+). The protein operates within amino-acid biosynthesis; L-isoleucine biosynthesis; L-isoleucine from 2-oxobutanoate: step 2/4. It functions in the pathway amino-acid biosynthesis; L-valine biosynthesis; L-valine from pyruvate: step 2/4. Functionally, involved in the biosynthesis of branched-chain amino acids (BCAA). Catalyzes an alkyl-migration followed by a ketol-acid reduction of (S)-2-acetolactate (S2AL) to yield (R)-2,3-dihydroxy-isovalerate. In the isomerase reaction, S2AL is rearranged via a Mg-dependent methyl migration to produce 3-hydroxy-3-methyl-2-ketobutyrate (HMKB). In the reductase reaction, this 2-ketoacid undergoes a metal-dependent reduction by NADPH to yield (R)-2,3-dihydroxy-isovalerate. This is Ketol-acid reductoisomerase (NADP(+)) from Prochlorococcus marinus (strain MIT 9215).